A 328-amino-acid polypeptide reads, in one-letter code: Malate dehydrogenase (328 aa).

13–19 (GGTGQIA) serves as a coordination point for NAD(+). Positions 94 and 100 each coordinate substrate. Residues Asn107, Gln114, and 131 to 133 (VGN) contribute to the NAD(+) site. Residues Asn133 and Arg164 each coordinate substrate. His189 serves as the catalytic Proton acceptor.

It belongs to the LDH/MDH superfamily. MDH type 2 family.

It carries out the reaction (S)-malate + NAD(+) = oxaloacetate + NADH + H(+). Functionally, catalyzes the reversible oxidation of malate to oxaloacetate. In Chlamydia felis (strain Fe/C-56) (Chlamydophila felis), this protein is Malate dehydrogenase.